The following is a 363-amino-acid chain: tRNA-specific 2-thiouridylase MnmA (363 aa).

Residues 6–13 (AMSGGVDS) and L32 contribute to the ATP site. Residue C101 is the Nucleophile of the active site. An intrachain disulfide couples C101 to C193. G125 contributes to the ATP binding site. The segment at 143–145 (KDQ) is interaction with tRNA. C193 acts as the Cysteine persulfide intermediate in catalysis.

It belongs to the MnmA/TRMU family.

It localises to the cytoplasm. The enzyme catalyses S-sulfanyl-L-cysteinyl-[protein] + uridine(34) in tRNA + AH2 + ATP = 2-thiouridine(34) in tRNA + L-cysteinyl-[protein] + A + AMP + diphosphate + H(+). Its function is as follows. Catalyzes the 2-thiolation of uridine at the wobble position (U34) of tRNA, leading to the formation of s(2)U34. The sequence is that of tRNA-specific 2-thiouridylase MnmA from Mycobacterium marinum (strain ATCC BAA-535 / M).